Reading from the N-terminus, the 411-residue chain is Glutamate dehydrogenase 2, mitochondrial (411 aa).

A mitochondrion-targeting transit peptide spans 1–18; sequence MNALAATSRNFRQAARLL. Residue K102 is part of the active site.

The protein belongs to the Glu/Leu/Phe/Val dehydrogenases family. In terms of tissue distribution, expressed in roots. Expressed ubiquitously in various tissues.

It localises to the mitochondrion. It carries out the reaction L-glutamate + NAD(+) + H2O = 2-oxoglutarate + NH4(+) + NADH + H(+). It catalyses the reaction L-glutamate + NADP(+) + H2O = 2-oxoglutarate + NH4(+) + NADPH + H(+). This chain is Glutamate dehydrogenase 2, mitochondrial (GDH2), found in Oryza sativa subsp. japonica (Rice).